A 172-amino-acid chain; its full sequence is NADH-ubiquinone oxidoreductase chain 6 (172 aa).

The next 5 membrane-spanning stretches (helical) occupy residues 1–21 (MTNY…GLAL), 26–48 (IYGG…GFGG), 52–74 (GLMV…TAMA), 86–106 (WFIF…FYLF), and 147–167 (CATW…FIII).

Belongs to the complex I subunit 6 family. Core subunit of respiratory chain NADH dehydrogenase (Complex I) which is composed of 45 different subunits.

Its subcellular location is the mitochondrion inner membrane. The enzyme catalyses a ubiquinone + NADH + 5 H(+)(in) = a ubiquinol + NAD(+) + 4 H(+)(out). Its function is as follows. Core subunit of the mitochondrial membrane respiratory chain NADH dehydrogenase (Complex I) which catalyzes electron transfer from NADH through the respiratory chain, using ubiquinone as an electron acceptor. Essential for the catalytic activity and assembly of complex I. The chain is NADH-ubiquinone oxidoreductase chain 6 from Rattus norvegicus (Rat).